Reading from the N-terminus, the 501-residue chain is Inactive cytidine monophosphate-N-acetylneuraminic acid hydroxylase (501 aa).

Belongs to the CMP-Neu5Ac hydroxylase family. Widely expressed. Highly expressed in thymus. Not expressed in brain. May be expressed in adult stem cells (at protein level).

The protein localises to the cytoplasm. In terms of biological role, sialic acids are components of carbohydrate chains of glycoconjugates and are involved in cell-cell recognition and cell-pathogen interactions. That protein has no CMP-N-acetylneuraminate monooxygenase activity and is not able to convert CMP-N-acetylneuraminic acid (CMP-Neu5Ac) into its hydroxylated derivative CMP-N-glycolylneuraminic acid (CMP-Neu5Gc), a sialic acid abundantly expressed at the surface of many cells in vertebrates. However, it may play a role in Wnt signaling. This is Inactive cytidine monophosphate-N-acetylneuraminic acid hydroxylase (CMAHP) from Homo sapiens (Human).